A 276-amino-acid polypeptide reads, in one-letter code: B3 domain-containing protein REM22 (276 aa).

The segment at residues 11–115 (SETMSIQDTV…VFHFCVYEYG (105 aa)) is a DNA-binding region (TF-B3). A disordered region spans residues 141–164 (GNEESTKGLEESPRRGGTSRRRAK). Residues 144–154 (ESTKGLEESPR) are compositionally biased toward basic and acidic residues.

Its subcellular location is the nucleus. This Arabidopsis thaliana (Mouse-ear cress) protein is B3 domain-containing protein REM22 (REM22).